A 396-amino-acid chain; its full sequence is Phosphoglycerate kinase (396 aa).

Substrate contacts are provided by residues 21–23, Arg36, 59–62, Arg119, and Arg156; these read DFN and HLGK. ATP contacts are provided by residues Lys206, Gly294, Glu325, and 352–355; that span reads GGDS.

Belongs to the phosphoglycerate kinase family. Monomer.

It localises to the cytoplasm. It carries out the reaction (2R)-3-phosphoglycerate + ATP = (2R)-3-phospho-glyceroyl phosphate + ADP. Its pathway is carbohydrate degradation; glycolysis; pyruvate from D-glyceraldehyde 3-phosphate: step 2/5. In Listeria welshimeri serovar 6b (strain ATCC 35897 / DSM 20650 / CCUG 15529 / CIP 8149 / NCTC 11857 / SLCC 5334 / V8), this protein is Phosphoglycerate kinase.